A 257-amino-acid polypeptide reads, in one-letter code: Imidazole glycerol phosphate synthase subunit HisF (257 aa).

Residues Asp-11 and Asp-130 contribute to the active site.

This sequence belongs to the HisA/HisF family. As to quaternary structure, heterodimer of HisH and HisF.

The protein resides in the cytoplasm. It carries out the reaction 5-[(5-phospho-1-deoxy-D-ribulos-1-ylimino)methylamino]-1-(5-phospho-beta-D-ribosyl)imidazole-4-carboxamide + L-glutamine = D-erythro-1-(imidazol-4-yl)glycerol 3-phosphate + 5-amino-1-(5-phospho-beta-D-ribosyl)imidazole-4-carboxamide + L-glutamate + H(+). The protein operates within amino-acid biosynthesis; L-histidine biosynthesis; L-histidine from 5-phospho-alpha-D-ribose 1-diphosphate: step 5/9. IGPS catalyzes the conversion of PRFAR and glutamine to IGP, AICAR and glutamate. The HisF subunit catalyzes the cyclization activity that produces IGP and AICAR from PRFAR using the ammonia provided by the HisH subunit. This Shewanella woodyi (strain ATCC 51908 / MS32) protein is Imidazole glycerol phosphate synthase subunit HisF.